The sequence spans 293 residues: Oxidoreductase R2 (293 aa).

This sequence belongs to the asaB hydroxylase/desaturase family.

Its pathway is secondary metabolite biosynthesis. Functionally, oxidoreductase; part of the gene cluster that mediates the biosynthesis of squalestatin S1 (SQS1, also known as zaragozic acid A), a heavily oxidized fungal polyketide that offers potent cholesterol lowering activity by targeting squalene synthase (SS). SQS1 is composed of a 2,8-dioxobicyclic[3.2.1]octane-3,4,5-tricarboxyclic acid core that is connected to two lipophilic polyketide arms. These initial steps feature the priming of an unusual benzoic acid starter unit onto the highly reducing polyketide synthase pks2, followed by oxaloacetate extension and product release to generate a tricarboxylic acid containing product. The phenylalanine ammonia lyase (PAL) M7 and the acyl-CoA ligase M9 are involved in transforming phenylalanine into benzoyl-CoA. The citrate synthase-like protein R3 is involved in connecting the C-alpha-carbons of the hexaketide chain and oxaloacetate to afford the tricarboxylic acid unit. The potential hydrolytic enzymes, M8 and M10, are in close proximity to pks2 and may participate in product release. On the other side, the tetraketide arm is synthesized by a the squalestatin tetraketide synthase pks1 and enzymatically esterified to the core in the last biosynthetic step, by the acetyltransferase M4. The biosynthesis of the tetraketide must involve 3 rounds of chain extension. After the first and second rounds methyl-transfer occurs, and in all rounds of extension the ketoreductase and dehydratase are active. The enoyl reductase and C-MeT of pks1 are not active in the final round of extension. The acetyltransferase M4 appears to have a broad substrate selectivity for its acyl CoA substrate, allowing the in vitro synthesis of novel squalestatins. The biosynthesis of SQS1 requires several oxidative steps likely performed by oxidoreductases M1, R1 and R2. Finally, in support of the identification of the cluster as being responsible for SQS1 production, the cluster contains a gene encoding a putative squalene synthase (SS) R6, suggesting a likely mechanism for self-resistance. This Phoma sp. (strain ATCC 20986 / MF5453) protein is Oxidoreductase R2.